Consider the following 711-residue polypeptide: Methionine--tRNA ligase (711 aa).

The 'HIGH' region motif lies at 15 to 25 (PYTNGPIHIGH). Residues cysteine 147, cysteine 150, cysteine 160, and cysteine 163 each coordinate Zn(2+). Positions 336–340 (KLSTS) match the 'KMSKS' region motif. Threonine 339 serves as a coordination point for ATP. One can recognise a tRNA-binding domain in the interval 610-711 (DFAKMDIRIG…ADAPNGATVN (102 aa)).

Belongs to the class-I aminoacyl-tRNA synthetase family. MetG type 1 subfamily. In terms of assembly, homodimer. It depends on Zn(2+) as a cofactor.

The protein localises to the cytoplasm. It carries out the reaction tRNA(Met) + L-methionine + ATP = L-methionyl-tRNA(Met) + AMP + diphosphate. Is required not only for elongation of protein synthesis but also for the initiation of all mRNA translation through initiator tRNA(fMet) aminoacylation. In Flavobacterium johnsoniae (strain ATCC 17061 / DSM 2064 / JCM 8514 / BCRC 14874 / CCUG 350202 / NBRC 14942 / NCIMB 11054 / UW101) (Cytophaga johnsonae), this protein is Methionine--tRNA ligase.